Consider the following 142-residue polypeptide: Hemoglobin subunit alpha-1 (142 aa).

The 141-residue stretch at 2–142 folds into the Globin domain; the sequence is LLSADDKKHI…VSSVLTSKYR (141 aa). H59 contributes to the O2 binding site. H88 lines the heme b pocket.

The protein belongs to the globin family. In terms of assembly, heterotetramer of two alpha chains and two beta chains. As to expression, red blood cells.

Its function is as follows. Involved in oxygen transport from the lung to the various peripheral tissues. This chain is Hemoglobin subunit alpha-1 (hba1), found in Xenopus borealis (Kenyan clawed frog).